The sequence spans 238 residues: Ribonuclease PH (238 aa).

Residues Arg86 and 124 to 126 each bind phosphate; that span reads GTR.

The protein belongs to the RNase PH family. In terms of assembly, homohexameric ring arranged as a trimer of dimers.

The enzyme catalyses tRNA(n+1) + phosphate = tRNA(n) + a ribonucleoside 5'-diphosphate. In terms of biological role, phosphorolytic 3'-5' exoribonuclease that plays an important role in tRNA 3'-end maturation. Removes nucleotide residues following the 3'-CCA terminus of tRNAs; can also add nucleotides to the ends of RNA molecules by using nucleoside diphosphates as substrates, but this may not be physiologically important. Probably plays a role in initiation of 16S rRNA degradation (leading to ribosome degradation) during starvation. In Actinobacillus pleuropneumoniae serotype 5b (strain L20), this protein is Ribonuclease PH.